The sequence spans 186 residues: Peptidyl-tRNA hydrolase (186 aa).

Y14 provides a ligand contact to tRNA. H19 serves as the catalytic Proton acceptor. TRNA-binding residues include Y64, N66, and N112.

It belongs to the PTH family. In terms of assembly, monomer.

Its subcellular location is the cytoplasm. It catalyses the reaction an N-acyl-L-alpha-aminoacyl-tRNA + H2O = an N-acyl-L-amino acid + a tRNA + H(+). Its function is as follows. Hydrolyzes ribosome-free peptidyl-tRNAs (with 1 or more amino acids incorporated), which drop off the ribosome during protein synthesis, or as a result of ribosome stalling. Catalyzes the release of premature peptidyl moieties from peptidyl-tRNA molecules trapped in stalled 50S ribosomal subunits, and thus maintains levels of free tRNAs and 50S ribosomes. The sequence is that of Peptidyl-tRNA hydrolase from Bacillus cereus (strain ATCC 10987 / NRS 248).